A 367-amino-acid chain; its full sequence is Spermidine/putrescine import ATP-binding protein PotA (367 aa).

An ABC transporter domain is found at 10 to 240 (IEFKNVSLDY…PINHFVANFI (231 aa)). Residue 42-49 (GPSGSGKS) participates in ATP binding.

This sequence belongs to the ABC transporter superfamily. Spermidine/putrescine importer (TC 3.A.1.11.1) family. In terms of assembly, the complex is composed of two ATP-binding proteins (PotA), two transmembrane proteins (PotB and PotC) and a solute-binding protein (PotD).

It localises to the cell membrane. The catalysed reaction is ATP + H2O + polyamine-[polyamine-binding protein]Side 1 = ADP + phosphate + polyamineSide 2 + [polyamine-binding protein]Side 1.. Part of the ABC transporter complex PotABCD involved in spermidine/putrescine import. Responsible for energy coupling to the transport system. In Oenococcus oeni (strain ATCC BAA-331 / PSU-1), this protein is Spermidine/putrescine import ATP-binding protein PotA.